A 354-amino-acid polypeptide reads, in one-letter code: Guanine nucleotide-binding protein G(o) subunit alpha (354 aa).

Gly-2 carries N-myristoyl glycine lipidation. Cys-3 is lipidated: S-palmitoyl cysteine. The G-alpha domain maps to 32–354 (KDIKLLLLGA…ANNLRGCGLY (323 aa)). The interval 35 to 48 (KLLLLGAGESGKST) is G1 motif. Residues 40 to 47 (GAGESGKS), 176 to 182 (LRTRVKT), 201 to 205 (DVGGQ), 270 to 273 (NKKD), and Ala-326 each bind GTP. Mg(2+) contacts are provided by Ser-47 and Thr-182. Positions 174-182 (DILRTRVKT) are G2 motif. A G3 motif region spans residues 197–206 (FKLFDVGGQR). The G4 motif stretch occupies residues 266–273 (ILFLNKKD). The interval 324–329 (TCATDT) is G5 motif.

This sequence belongs to the G-alpha family. G(i/o/t/z) subfamily. G proteins are composed of 3 units; alpha, beta and gamma. The alpha chain contains the guanine nucleotide binding site.

Functionally, guanine nucleotide-binding proteins (G proteins) are involved as modulators or transducers in various transmembrane signaling systems. The G(o) protein function is not clear. This is Guanine nucleotide-binding protein G(o) subunit alpha from Planorbella trivolvis (Marsh rams-horn).